The sequence spans 538 residues: NADH-quinone oxidoreductase subunit N (538 aa).

The next 14 helical transmembrane spans lie at 12 to 32 (IAYG…VSVL), 47 to 67 (LALA…LSGS), 81 to 101 (PTLY…VVMA), 144 to 164 (GITQ…MMLF), 170 to 190 (LLTM…MCAL), 205 to 225 (YFLL…FVYG), 248 to 268 (FLLL…GAVP), 294 to 314 (IAAF…ITTD), 317 to 337 (PVLW…AVTQ), 343 to 363 (MLAY…AAAN), 371 to 391 (LFYL…AGLV), 423 to 443 (APVL…IPLT), 472 to 492 (SAIA…ADPV), and 502 to 522 (GPAV…LGVA).

The protein belongs to the complex I subunit 2 family. As to quaternary structure, NDH-1 is composed of 14 different subunits. Subunits NuoA, H, J, K, L, M, N constitute the membrane sector of the complex.

Its subcellular location is the cell membrane. The catalysed reaction is a quinone + NADH + 5 H(+)(in) = a quinol + NAD(+) + 4 H(+)(out). Its function is as follows. NDH-1 shuttles electrons from NADH, via FMN and iron-sulfur (Fe-S) centers, to quinones in the respiratory chain. The immediate electron acceptor for the enzyme in this species is believed to be a menaquinone. Couples the redox reaction to proton translocation (for every two electrons transferred, four hydrogen ions are translocated across the cytoplasmic membrane), and thus conserves the redox energy in a proton gradient. This is NADH-quinone oxidoreductase subunit N from Mycobacteroides abscessus (strain ATCC 19977 / DSM 44196 / CCUG 20993 / CIP 104536 / JCM 13569 / NCTC 13031 / TMC 1543 / L948) (Mycobacterium abscessus).